A 403-amino-acid chain; its full sequence is TBC1 domain family member 20 (403 aa).

The interval 1–25 (MALRSAQGDGPTSGHWDGGAEKADF) is disordered. Residues 60–246 (LLTDEIRRKV…RLYDFFLACH (187 aa)) form the Rab-GAP TBC domain. 2 helical membrane passes run 238–258 (LYDF…AVIV) and 367–387 (FVKL…LAVV).

In terms of assembly, (Microbial infection) Directly interacts with the N-terminal amphipathic helix of hepatitis C virus (HCV) NS5A.

It localises to the membrane. Its function is as follows. GTPase-activating protein (GAP) specific for Rab1 and Rab2 small GTPase families for which it can accelerate the intrinsic GTP hydrolysis rate by more than five orders of magnitude. Also shows GAP activity for RAB18 GTPase. Promotes RAB18 dissociation from the endoplasmic reticulum (ER) membrane into the cytosol, probably through stimulating RAB18 GTP-hydrolysis. Involved in maintaining endoplasmic reticulum structure. The protein is TBC1 domain family member 20 of Homo sapiens (Human).